The sequence spans 648 residues: Macrolide export ATP-binding/permease protein MacB (648 aa).

Residues 5 to 243 (LELCNVSRSY…QGVDAAVVNT (239 aa)) form the ABC transporter domain. ATP is bound at residue 41 to 48 (GVSGSGKS). The next 5 helical transmembrane spans lie at 273-293 (LLTMLGIIIGIASVVSIVVVG), 417-437 (ANVVGEVVLAGNMPVIVIGVA), 523-543 (LFLTLVAVISLVVGGIGVMNI), 577-597 (VLVCLVGGALGISLSMFIAFM), and 611-631 (LTALASAFLCSTFTGILFGWL).

The protein belongs to the ABC transporter superfamily. Macrolide exporter (TC 3.A.1.122) family. As to quaternary structure, homodimer. Part of the tripartite efflux system MacAB-TolC, which is composed of an inner membrane transporter, MacB, a periplasmic membrane fusion protein, MacA, and an outer membrane component, TolC. The complex forms a large protein conduit and can translocate molecules across both the inner and outer membranes. Interacts with MacA.

The protein resides in the cell inner membrane. Part of the tripartite efflux system MacAB-TolC. MacB is a non-canonical ABC transporter that contains transmembrane domains (TMD), which form a pore in the inner membrane, and an ATP-binding domain (NBD), which is responsible for energy generation. Confers resistance against macrolides. In Salmonella choleraesuis (strain SC-B67), this protein is Macrolide export ATP-binding/permease protein MacB.